We begin with the raw amino-acid sequence, 106 residues long: UPF0122 protein Exig_1902 (106 aa).

The protein belongs to the UPF0122 family.

Might take part in the signal recognition particle (SRP) pathway. This is inferred from the conservation of its genetic proximity to ftsY/ffh. May be a regulatory protein. The polypeptide is UPF0122 protein Exig_1902 (Exiguobacterium sibiricum (strain DSM 17290 / CCUG 55495 / CIP 109462 / JCM 13490 / 255-15)).